Consider the following 608-residue polypeptide: ATP-citrate synthase beta chain protein 1 (608 aa).

ATP-binding positions include 214 to 234 and 265 to 291; these read ILRFNNIPQIKMVVVLGELGG and FKSEVQFGHAGAKSGGEMESAQAKNQA. Glu231 provides a ligand contact to Mg(2+). The active-site Tele-phosphohistidine intermediate is the His273. Residue 292-302 participates in CoA binding; it reads LQDAGATVPTS.

It belongs to the succinate/malate CoA ligase alpha subunit family. As to quaternary structure, heterooctamer of 4 alpha and 4 beta chains.

It localises to the cytoplasm. The protein localises to the cytosol. The enzyme catalyses oxaloacetate + acetyl-CoA + ADP + phosphate = citrate + ATP + CoA. Functionally, ATP citrate-lyase is the primary enzyme responsible for the synthesis of cytosolic acetyl-CoA, used for the elongation of fatty acids and biosynthesis of isoprenoids, flavonoids and malonated derivatives. May supply substrate to the cytosolic acetyl-CoA carboxylase, which generates the malonyl-CoA used for the synthesis of a multitude of compounds, including very long chain fatty acids and flavonoids. Required for normal growth and development and elongation of C18 fatty acids to C20 to C24 fatty acids in seeds. In contrast to all known animal ACL enzymes having a homomeric structure, plant ACLs are composed of alpha and beta chains. This chain is ATP-citrate synthase beta chain protein 1 (ACLB-1), found in Arabidopsis thaliana (Mouse-ear cress).